Reading from the N-terminus, the 218-residue chain is Large ribosomal subunit protein uL3 (218 aa).

This sequence belongs to the universal ribosomal protein uL3 family. Part of the 50S ribosomal subunit. Forms a cluster with proteins L14 and L19.

One of the primary rRNA binding proteins, it binds directly near the 3'-end of the 23S rRNA, where it nucleates assembly of the 50S subunit. The polypeptide is Large ribosomal subunit protein uL3 (Corynebacterium glutamicum (strain R)).